Reading from the N-terminus, the 237-residue chain is 3-oxoacyl-[acyl-carrier-protein] reductase (237 aa).

Met1 is modified (N-acetylmethionine). Residues 11-14 (SRGI) and 34-35 (RN) each bind NADP(+). N6-acetyllysine is present on Lys40. NADP(+) is bound by residues Asp56 and 83 to 85 (AAG). An N6-acetyllysine modification is found at Lys96. Ser135 is a binding site for substrate. Residues Tyr148, Lys152, and 181-183 (VHT) each bind NADP(+). Catalysis depends on Tyr148, which acts as the Proton acceptor. N6-acetyllysine is present on Lys195.

This sequence belongs to the short-chain dehydrogenases/reductases (SDR) family. In terms of assembly, homotetramer (in vitro). Heterotetramer with HSD17B8; contains two molecules each of HSD17B8 and CBR4. Does not form homotetramers when HSD17B8 is coexpressed, only heterotetramers (in vitro). Detected in liver and kidney (at protein level). Displays the highest expression in neuronal and muscle tissues.

The protein localises to the mitochondrion matrix. The enzyme catalyses a (3R)-hydroxyacyl-[ACP] + NADP(+) = a 3-oxoacyl-[ACP] + NADPH + H(+). It carries out the reaction a quinone + NADPH + H(+) = a quinol + NADP(+). The protein operates within lipid metabolism; fatty acid biosynthesis. Its function is as follows. Component of the heterotetramer complex KAR (3-ketoacyl-[acyl carrier protein] reductase or 3-ketoacyl-[ACP] reductase) that forms part of the mitochondrial fatty acid synthase (mtFAS). Beta-subunit of the KAR heterotetramer complex, responsible for the 3-ketoacyl-ACP reductase activity of the mtFAS, reduces 3-oxoacyl-[ACP] to (3R)-hydroxyacyl-[ACP] in a NADPH-dependent manner with no chain length preference, thereby participating in mitochondrial fatty acid biosynthesis. The homotetramer has NADPH-dependent quinone reductase activity (in vitro), hence could play a role in protection against cytotoxicity of exogenous quinones. As a heterotetramer, it can also reduce 9,10-phenanthrenequinone, 1,4-benzoquinone and various other o-quinones and p-quinones (in vitro). This Homo sapiens (Human) protein is 3-oxoacyl-[acyl-carrier-protein] reductase (CBR4).